The primary structure comprises 248 residues: Probable transcriptional regulatory protein Desal_2886 (248 aa).

Positions 1–21 (MAGHSKWANIQHRKGRQDAKR) are disordered.

This sequence belongs to the TACO1 family.

It is found in the cytoplasm. The protein is Probable transcriptional regulatory protein Desal_2886 of Maridesulfovibrio salexigens (strain ATCC 14822 / DSM 2638 / NCIMB 8403 / VKM B-1763) (Desulfovibrio salexigens).